Consider the following 417-residue polypeptide: Cell division protein FtsA (417 aa).

This sequence belongs to the FtsA/MreB family. Self-interacts. Interacts with FtsZ.

It localises to the cell inner membrane. Its function is as follows. Cell division protein that is involved in the assembly of the Z ring. May serve as a membrane anchor for the Z ring. The polypeptide is Cell division protein FtsA (Pseudomonas aeruginosa (strain ATCC 15692 / DSM 22644 / CIP 104116 / JCM 14847 / LMG 12228 / 1C / PRS 101 / PAO1)).